The following is a 146-amino-acid chain: THWTAEERHYITSMWDKINVAEIGGESLARMLIVYPWTQKFFSDFGNLTSSSAIMHNVKIQEHGKKVLNSFGSAVKNMDHIKETFADLSKLHCETLHVDPENFKLLGSILIIVLAMHFGKEPTPTWQAAWQKLVSAVAHALTLQYH.

A Blocked amino end (Thr) modification is found at threonine 1. In terms of domain architecture, Globin spans 2-146 (HWTAEERHYI…VAHALTLQYH (145 aa)). The heme b site is built by histidine 63 and histidine 92.

Belongs to the globin family. In terms of assembly, heterotetramer of two alpha chains and two beta chains. Red blood cells.

In terms of biological role, involved in oxygen transport from the lung to the various peripheral tissues. The protein is Hemoglobin subunit beta (HBB) of Caretta caretta (Loggerhead sea turtle).